The sequence spans 153 residues: UPF0102 protein Pnap_0271 (153 aa).

This sequence belongs to the UPF0102 family.

This is UPF0102 protein Pnap_0271 from Polaromonas naphthalenivorans (strain CJ2).